The primary structure comprises 859 residues: Auxin response factor 2 (859 aa).

Positions 1 to 48 (MASSEVSMKGNRGGDNFSSSGFSDPKETRNVSVAGEGQKSNSTRSAAA) are disordered. Low complexity predominate over residues 14 to 23 (GDNFSSSGFS). Positions 164–266 (FCKTLTASDT…ELRVGVRRAM (103 aa)) form a DNA-binding region, TF-B3. Residues 396–407 (LAPPALSPVPMP) show a composition bias toward pro residues. Disordered regions lie at residues 396–442 (LAPP…LPAS), 687–736 (IASP…RSCT), and 829–859 (RSEEEAVVGEGSDAKDAKSASNPSLSSAGNS). Composition is skewed to polar residues over residues 416 to 426 (IAPSSPDSSML) and 695 to 704 (LSDQSKGSKS). The region spanning 733–817 (RSCTKVHKQG…RKIFIYTKEE (85 aa)) is the PB1 domain. Positions 847 to 859 (SASNPSLSSAGNS) are enriched in polar residues.

The protein belongs to the ARF family. In terms of assembly, homodimers and heterodimers. Interacts with ARF1. In terms of tissue distribution, expressed in the whole plant.

The protein resides in the nucleus. Functionally, auxin response factors (ARFs) are transcriptional factors that bind specifically to the DNA sequence 5'-TGTCTC-3' found in the auxin-responsive promoter elements (AuxREs). Could act as transcriptional activator or repressor. Formation of heterodimers with Aux/IAA proteins may alter their ability to modulate early auxin response genes expression. Promotes flowering, stamen development, floral organ abscission and fruit dehiscence. Functions independently of ethylene and cytokinin response pathways. May act as a repressor of cell division and organ growth. In Arabidopsis thaliana (Mouse-ear cress), this protein is Auxin response factor 2 (ARF2).